A 1002-amino-acid polypeptide reads, in one-letter code: uncharacterized protein (1002 aa).

This is an uncharacterized protein from Fiji disease virus (isolate Sugarcane) (FDV).